The sequence spans 64 residues: MKRSKTLRAADAKVDREKLYAPLEAVRLAKETSTTKFDATVEVAFRLGVDPRKADQMVRGTVNL.

It belongs to the universal ribosomal protein uL1 family. In terms of assembly, part of the 50S ribosomal subunit.

Its function is as follows. Binds directly to 23S rRNA. The L1 stalk is quite mobile in the ribosome, and is involved in E site tRNA release. In terms of biological role, protein L1 is also a translational repressor protein, it controls the translation of the L11 operon by binding to its mRNA. The chain is Large ribosomal subunit protein uL1 (rplA) from Streptomyces lavendulae.